Reading from the N-terminus, the 154-residue chain is UPF0756 membrane protein YtwI (154 aa).

Helical transmembrane passes span 8 to 28 (FLILLLAIALIAKNQSLLFAV), 54 to 74 (WGVTIITIAVLVPIATGEIGF), 87 to 107 (WIALGAGIAVALIAKNGLTLL), and 117 to 137 (LVIGTILAVALFGGVAVGPLI).

Belongs to the UPF0756 family.

The protein resides in the cell membrane. This chain is UPF0756 membrane protein YtwI (ytwI), found in Bacillus subtilis (strain 168).